The following is a 418-amino-acid chain: D-amino acid dehydrogenase (418 aa).

Position 3-17 (3-17 (VTILGAGVVGVTSAW)) interacts with FAD.

This sequence belongs to the DadA oxidoreductase family. FAD serves as cofactor.

It carries out the reaction a D-alpha-amino acid + A + H2O = a 2-oxocarboxylate + AH2 + NH4(+). It functions in the pathway amino-acid degradation; D-alanine degradation; NH(3) and pyruvate from D-alanine: step 1/1. Oxidative deamination of D-amino acids. The chain is D-amino acid dehydrogenase from Agrobacterium fabrum (strain C58 / ATCC 33970) (Agrobacterium tumefaciens (strain C58)).